The sequence spans 330 residues: Lipoyl synthase (330 aa).

[4Fe-4S] cluster contacts are provided by Cys55, Cys60, Cys66, Cys81, Cys85, Cys88, and Ser292. The Radical SAM core domain maps to 67-281; the sequence is WEDREATFLI…AEEAREIGFV (215 aa).

It belongs to the radical SAM superfamily. Lipoyl synthase family. The cofactor is [4Fe-4S] cluster.

Its subcellular location is the cytoplasm. It catalyses the reaction [[Fe-S] cluster scaffold protein carrying a second [4Fe-4S](2+) cluster] + N(6)-octanoyl-L-lysyl-[protein] + 2 oxidized [2Fe-2S]-[ferredoxin] + 2 S-adenosyl-L-methionine + 4 H(+) = [[Fe-S] cluster scaffold protein] + N(6)-[(R)-dihydrolipoyl]-L-lysyl-[protein] + 4 Fe(3+) + 2 hydrogen sulfide + 2 5'-deoxyadenosine + 2 L-methionine + 2 reduced [2Fe-2S]-[ferredoxin]. It functions in the pathway protein modification; protein lipoylation via endogenous pathway; protein N(6)-(lipoyl)lysine from octanoyl-[acyl-carrier-protein]: step 2/2. Functionally, catalyzes the radical-mediated insertion of two sulfur atoms into the C-6 and C-8 positions of the octanoyl moiety bound to the lipoyl domains of lipoate-dependent enzymes, thereby converting the octanoylated domains into lipoylated derivatives. This is Lipoyl synthase from Cutibacterium acnes (strain DSM 16379 / KPA171202) (Propionibacterium acnes).